The sequence spans 415 residues: Acetate kinase (415 aa).

Mg(2+) is bound at residue Asn-8. Residue Lys-15 participates in ATP binding. Position 106 (Arg-106) interacts with substrate. Asp-163 acts as the Proton donor/acceptor in catalysis. ATP contacts are provided by residues 222–226 (HLGNG), 296–298 (DLR), and 344–348 (GIGEN). Position 397 (Glu-397) interacts with Mg(2+).

This sequence belongs to the acetokinase family. As to quaternary structure, homodimer. Mg(2+) is required as a cofactor. Requires Mn(2+) as cofactor.

The protein localises to the cytoplasm. It carries out the reaction acetate + ATP = acetyl phosphate + ADP. Its pathway is metabolic intermediate biosynthesis; acetyl-CoA biosynthesis; acetyl-CoA from acetate: step 1/2. Its function is as follows. Catalyzes the formation of acetyl phosphate from acetate and ATP. Can also catalyze the reverse reaction. The sequence is that of Acetate kinase from Thermosynechococcus vestitus (strain NIES-2133 / IAM M-273 / BP-1).